The primary structure comprises 299 residues: ATP phosphoribosyltransferase (299 aa).

The protein belongs to the ATP phosphoribosyltransferase family. Long subfamily. In terms of assembly, equilibrium between an active dimeric form, an inactive hexameric form and higher aggregates. Interconversion between the various forms is largely reversible and is influenced by the natural substrates and inhibitors of the enzyme. The cofactor is Mg(2+).

The protein localises to the cytoplasm. The catalysed reaction is 1-(5-phospho-beta-D-ribosyl)-ATP + diphosphate = 5-phospho-alpha-D-ribose 1-diphosphate + ATP. Its pathway is amino-acid biosynthesis; L-histidine biosynthesis; L-histidine from 5-phospho-alpha-D-ribose 1-diphosphate: step 1/9. Feedback inhibited by histidine. Functionally, catalyzes the condensation of ATP and 5-phosphoribose 1-diphosphate to form N'-(5'-phosphoribosyl)-ATP (PR-ATP). Has a crucial role in the pathway because the rate of histidine biosynthesis seems to be controlled primarily by regulation of HisG enzymatic activity. This chain is ATP phosphoribosyltransferase, found in Escherichia fergusonii (strain ATCC 35469 / DSM 13698 / CCUG 18766 / IAM 14443 / JCM 21226 / LMG 7866 / NBRC 102419 / NCTC 12128 / CDC 0568-73).